A 307-amino-acid polypeptide reads, in one-letter code: 1D-myo-inositol 2-acetamido-2-deoxy-alpha-D-glucopyranoside deacetylase 1 (307 aa).

3 residues coordinate Zn(2+): histidine 21, aspartate 24, and histidine 157.

Belongs to the MshB deacetylase family. Zn(2+) serves as cofactor.

The enzyme catalyses 1D-myo-inositol 2-acetamido-2-deoxy-alpha-D-glucopyranoside + H2O = 1D-myo-inositol 2-amino-2-deoxy-alpha-D-glucopyranoside + acetate. In terms of biological role, catalyzes the deacetylation of 1D-myo-inositol 2-acetamido-2-deoxy-alpha-D-glucopyranoside (GlcNAc-Ins) in the mycothiol biosynthesis pathway. This Frankia casuarinae (strain DSM 45818 / CECT 9043 / HFP020203 / CcI3) protein is 1D-myo-inositol 2-acetamido-2-deoxy-alpha-D-glucopyranoside deacetylase 1.